The primary structure comprises 262 residues: Hemin import ATP-binding protein HmuV (262 aa).

In terms of domain architecture, ABC transporter spans 3-244; the sequence is LQARNLTLAR…DHMRRVYGIE (242 aa). 35-42 provides a ligand contact to ATP; that stretch reads GANGAGKS.

The protein belongs to the ABC transporter superfamily. Heme (hemin) importer (TC 3.A.1.14.5) family. The complex is composed of two ATP-binding proteins (HmuV), two transmembrane proteins (HmuU) and a solute-binding protein (HmuT).

Its subcellular location is the cell inner membrane. Part of the ABC transporter complex HmuTUV involved in hemin import. Responsible for energy coupling to the transport system. This chain is Hemin import ATP-binding protein HmuV, found in Bordetella bronchiseptica (strain ATCC BAA-588 / NCTC 13252 / RB50) (Alcaligenes bronchisepticus).